The primary structure comprises 73 residues: Large ribosomal subunit protein bL31 (73 aa).

Belongs to the bacterial ribosomal protein bL31 family. Type A subfamily. As to quaternary structure, part of the 50S ribosomal subunit.

Its function is as follows. Binds the 23S rRNA. This chain is Large ribosomal subunit protein bL31, found in Bartonella bacilliformis (strain ATCC 35685 / KC583 / Herrer 020/F12,63).